A 388-amino-acid polypeptide reads, in one-letter code: Succinate--CoA ligase [ADP-forming] subunit beta (388 aa).

An ATP-grasp domain is found at 9 to 246; sequence KDILRQFGVP…FEEEDPAEVL (238 aa). Residues lysine 46, 53–55, glutamate 99, alanine 102, and glutamate 107 contribute to the ATP site; that span reads GRG. Residues asparagine 201 and aspartate 215 each coordinate Mg(2+). Substrate-binding positions include asparagine 266 and 323-325; that span reads GIM.

This sequence belongs to the succinate/malate CoA ligase beta subunit family. As to quaternary structure, heterotetramer of two alpha and two beta subunits. Mg(2+) is required as a cofactor.

The enzyme catalyses succinate + ATP + CoA = succinyl-CoA + ADP + phosphate. It catalyses the reaction GTP + succinate + CoA = succinyl-CoA + GDP + phosphate. It functions in the pathway carbohydrate metabolism; tricarboxylic acid cycle; succinate from succinyl-CoA (ligase route): step 1/1. Succinyl-CoA synthetase functions in the citric acid cycle (TCA), coupling the hydrolysis of succinyl-CoA to the synthesis of either ATP or GTP and thus represents the only step of substrate-level phosphorylation in the TCA. The beta subunit provides nucleotide specificity of the enzyme and binds the substrate succinate, while the binding sites for coenzyme A and phosphate are found in the alpha subunit. This is Succinate--CoA ligase [ADP-forming] subunit beta from Verminephrobacter eiseniae (strain EF01-2).